Reading from the N-terminus, the 439-residue chain is Glucose-6-phosphate 1-dehydrogenase (439 aa).

NADP(+) is bound at residue Lys-100. His-130, Lys-134, Glu-168, and Asp-187 together coordinate substrate. Catalysis depends on His-192, which acts as the Proton acceptor. Lys-288 contributes to the substrate binding site.

This sequence belongs to the glucose-6-phosphate dehydrogenase family.

The catalysed reaction is D-glucose 6-phosphate + NADP(+) = 6-phospho-D-glucono-1,5-lactone + NADPH + H(+). The protein operates within carbohydrate degradation; pentose phosphate pathway; D-ribulose 5-phosphate from D-glucose 6-phosphate (oxidative stage): step 1/3. Its function is as follows. Catalyzes the oxidation of glucose 6-phosphate to 6-phosphogluconolactone. In Chlamydia trachomatis serovar D (strain ATCC VR-885 / DSM 19411 / UW-3/Cx), this protein is Glucose-6-phosphate 1-dehydrogenase.